A 101-amino-acid chain; its full sequence is Urease subunit beta (101 aa).

This sequence belongs to the urease beta subunit family. In terms of assembly, heterotrimer of UreA (gamma), UreB (beta) and UreC (alpha) subunits. Three heterotrimers associate to form the active enzyme.

Its subcellular location is the cytoplasm. The enzyme catalyses urea + 2 H2O + H(+) = hydrogencarbonate + 2 NH4(+). It functions in the pathway nitrogen metabolism; urea degradation; CO(2) and NH(3) from urea (urease route): step 1/1. The polypeptide is Urease subunit beta (Nostoc punctiforme (strain ATCC 29133 / PCC 73102)).